A 327-amino-acid polypeptide reads, in one-letter code: Zinc finger C2HC domain-containing protein 1A (327 aa).

Residues 13 to 42 (ELVPCKICGRSFFPKVLKKHVPICQKTAAK) form a C2HC/C3H-type 1 zinc finger. Positions 17, 20, 32, and 36 each coordinate Zn(2+). 2 disordered regions span residues 40 to 96 (AAKR…KHEE) and 108 to 131 (NQVI…DYIQ). Residues 46–56 (VFDSGRQRAEG) are compositionally biased toward basic and acidic residues. Low complexity predominate over residues 63–76 (KPIKPKLQSSSSSS). A compositionally biased stretch (pro residues) spans 116–125 (PLPPPPPPSY). Residues 128–157 (DYIQCPYCQRRFGENAADRHIKFCKEQASR) form a C2HC/C3H-type 2 zinc finger. Zn(2+)-binding residues include Cys-132, Cys-135, His-147, and Cys-151. The disordered stretch occupies residues 154-271 (QASRISNKSK…NPSTGIGMNK (118 aa)). Residues 187 to 199 (NSPTASSVSSRLP) show a composition bias toward polar residues. Low complexity predominate over residues 211–229 (GIPSSKPSSTGSIKSTPSG). Polar residues-rich tracts occupy residues 233 to 245 (LRNN…SPPS) and 255 to 267 (VSQS…STGI).

Belongs to the ZC2HC1 family. Requires Zn(2+) as cofactor.

This chain is Zinc finger C2HC domain-containing protein 1A (zc2hc1a), found in Danio rerio (Zebrafish).